The primary structure comprises 260 residues: HTH-type transcriptional repressor NanR (260 aa).

The interval 1–20 (MNPFDSQSEDASDAIGRSLG) is disordered. In terms of domain architecture, HTH gntR-type spans 27-95 (KKLSEMVEEE…NGERARVSRP (69 aa)). Residues 55–74 (ERELMAFFNVGRPSVREALA) constitute a DNA-binding region (H-T-H motif).

The protein belongs to the NanR family.

Functionally, transcriptional repressor that controls expression of the genes required for the catabolism of sialic acids. This Cronobacter sakazakii (strain ATCC BAA-894) (Enterobacter sakazakii) protein is HTH-type transcriptional repressor NanR.